We begin with the raw amino-acid sequence, 233 residues long: Coproporphyrinogen-III oxidase 2, chloroplastic (233 aa).

The N-terminal 48 residues, 1-48, are a transit peptide targeting the chloroplast; the sequence is MASHSSTLFTSPSSFILFSSHRLKSSPNYFTYHFPRSVKRPHFDLRCS. Position 174 (Ser174) interacts with substrate. The active-site Proton donor is His188.

The protein belongs to the aerobic coproporphyrinogen-III oxidase family. Homodimer.

It is found in the plastid. It localises to the chloroplast. The catalysed reaction is coproporphyrinogen III + O2 + 2 H(+) = protoporphyrinogen IX + 2 CO2 + 2 H2O. It functions in the pathway porphyrin-containing compound metabolism; protoporphyrin-IX biosynthesis; protoporphyrinogen-IX from coproporphyrinogen-III (O2 route): step 1/1. Its pathway is porphyrin-containing compound metabolism; chlorophyll biosynthesis. Functionally, key enzyme in heme biosynthesis. Catalyzes the oxidative decarboxylation of propionic acid side chains of rings A and B of coproporphyrinogen III. The chain is Coproporphyrinogen-III oxidase 2, chloroplastic (CPX2) from Arabidopsis thaliana (Mouse-ear cress).